Consider the following 501-residue polypeptide: Aromatase 3 (501 aa).

Cys435 contributes to the heme binding site.

It belongs to the cytochrome P450 family. It depends on heme as a cofactor. Ovary.

It is found in the membrane. It catalyses the reaction testosterone + 3 reduced [NADPH--hemoprotein reductase] + 3 O2 = 17beta-estradiol + formate + 3 oxidized [NADPH--hemoprotein reductase] + 4 H2O + 4 H(+). The catalysed reaction is androst-4-ene-3,17-dione + 3 reduced [NADPH--hemoprotein reductase] + 3 O2 = estrone + formate + 3 oxidized [NADPH--hemoprotein reductase] + 4 H2O + 4 H(+). Catalyzes the formation of aromatic C18 estrogens from C19 androgens. The polypeptide is Aromatase 3 (CYP19A3) (Sus scrofa (Pig)).